Here is a 160-residue protein sequence, read N- to C-terminus: 6,7-dimethyl-8-ribityllumazine synthase (160 aa).

5-amino-6-(D-ribitylamino)uracil is bound by residues phenylalanine 32, 66–68, and 90–92; these read ALE and CII. 95-96 contacts (2S)-2-hydroxy-3-oxobutyl phosphate; that stretch reads ET. Histidine 98 serves as the catalytic Proton donor. Asparagine 123 provides a ligand contact to 5-amino-6-(D-ribitylamino)uracil. Arginine 137 is a binding site for (2S)-2-hydroxy-3-oxobutyl phosphate.

The protein belongs to the DMRL synthase family.

The catalysed reaction is (2S)-2-hydroxy-3-oxobutyl phosphate + 5-amino-6-(D-ribitylamino)uracil = 6,7-dimethyl-8-(1-D-ribityl)lumazine + phosphate + 2 H2O + H(+). It participates in cofactor biosynthesis; riboflavin biosynthesis; riboflavin from 2-hydroxy-3-oxobutyl phosphate and 5-amino-6-(D-ribitylamino)uracil: step 1/2. Functionally, catalyzes the formation of 6,7-dimethyl-8-ribityllumazine by condensation of 5-amino-6-(D-ribitylamino)uracil with 3,4-dihydroxy-2-butanone 4-phosphate. This is the penultimate step in the biosynthesis of riboflavin. The chain is 6,7-dimethyl-8-ribityllumazine synthase from Methylibium petroleiphilum (strain ATCC BAA-1232 / LMG 22953 / PM1).